A 68-amino-acid chain; its full sequence is DNA-directed RNA polymerase subunit omega (68 aa).

The protein belongs to the RNA polymerase subunit omega family. In terms of assembly, the RNAP catalytic core consists of 2 alpha, 1 beta, 1 beta' and 1 omega subunit. When a sigma factor is associated with the core the holoenzyme is formed, which can initiate transcription.

The enzyme catalyses RNA(n) + a ribonucleoside 5'-triphosphate = RNA(n+1) + diphosphate. Promotes RNA polymerase assembly. Latches the N- and C-terminal regions of the beta' subunit thereby facilitating its interaction with the beta and alpha subunits. This chain is DNA-directed RNA polymerase subunit omega, found in Trichlorobacter lovleyi (strain ATCC BAA-1151 / DSM 17278 / SZ) (Geobacter lovleyi).